Reading from the N-terminus, the 436-residue chain is UPF0229 protein Meso_0256 (436 aa).

The disordered stretch occupies residues 53 to 110; it reads PMPARGTSEPTFRPDRSSGERGYILPGNKEFAPGDRLPKPGASGGEGGTGAGRGGSDD. Gly residues predominate over residues 94-106; the sequence is ASGGEGGTGAGRG.

It belongs to the UPF0229 family.

The polypeptide is UPF0229 protein Meso_0256 (Chelativorans sp. (strain BNC1)).